The sequence spans 210 residues: Outer-membrane lipoprotein LolB (210 aa).

Residues 1–29 form the signal peptide; it reads MSLISNNEERSLRVRYCIAIALSALLISG. Cys-30 carries the N-palmitoyl cysteine lipid modification. Cys-30 carries the S-diacylglycerol cysteine lipid modification.

Belongs to the LolB family. In terms of assembly, monomer.

The protein resides in the cell outer membrane. Functionally, plays a critical role in the incorporation of lipoproteins in the outer membrane after they are released by the LolA protein. The sequence is that of Outer-membrane lipoprotein LolB from Coxiella burnetii (strain CbuK_Q154) (Coxiella burnetii (strain Q154)).